The sequence spans 1012 residues: 5'-3' exoribonuclease 2 (1012 aa).

The CCHC-type zinc finger occupies 264–281 (GKCFLCGQEGHRAADCEG). Disordered stretches follow at residues 411 to 439 (VQQR…AQAS), 888 to 976 (TFKD…QRQV), and 990 to 1012 (QRKK…PKTA). The segment covering 415-433 (QSERFRRDKARDKARDNAR) has biased composition (basic and acidic residues). The span at 904 to 914 (ITPKKMNSPQR) shows a compositional bias: polar residues. Composition is skewed to basic and acidic residues over residues 918-928 (WKKDETPQSRE) and 950-962 (PQRE…KKEN). The span at 990 to 1002 (QRKKEKYLRKKAK) shows a compositional bias: basic residues.

The protein belongs to the 5'-3' exonuclease family. XRN2/RAT1 subfamily. Expressed in roots, leaves, stems and flowers.

Its subcellular location is the nucleus. Possesses 5'-&gt;3' exoribonuclease activity. Acts as an endogenous post-transcriptional gene silencing (PTGS) suppressor. Degrades miRNA-derived loops, excised during miRNA maturation in the nucleus. Involved in pre-rRNA processing. Involved in the primary exonucleolytic shortening of the 5' external transcribed spacer (5'ETS), required for endonucleolytic processing at site P by the U3 snoRNP complex. Involved with XRN3 in the 5'-end processing of 5.8S and 25S rRNAs. Contributes with XRN3 to polyadenylation-dependent nuclear RNA surveillance. Involved in the degradation of aberrant polyadenylated pre-rRNA through 5'-end processing. In Arabidopsis thaliana (Mouse-ear cress), this protein is 5'-3' exoribonuclease 2.